A 128-amino-acid polypeptide reads, in one-letter code: RxLR effector protein SFI2 (128 aa).

A signal peptide spans 1-22; the sequence is MRSAFYIFLVVAVLARCSVVAA. The short motif at 52–71 is the RxLR-dEER element; the sequence is RLLRVAGREDDDATTDEEDR.

This sequence belongs to the RxLR effector family.

Its subcellular location is the secreted. It localises to the host nucleus. Effector that suppresses flg22-induced post-translational MAP kinase activation both tomato and Arabidopsis. The perception of highly conserved pathogen- or microbe-associated molecular patterns (PAMPs/MAMPs), such as flg22, triggers converging signaling pathways recruiting MAP kinase cascades and inducing transcriptional re-programming, yielding a generic antimicrobial response. This is RxLR effector protein SFI2 from Phytophthora infestans (strain T30-4) (Potato late blight agent).